A 219-amino-acid polypeptide reads, in one-letter code: Interleukin-12 subunit alpha (219 aa).

An N-terminal signal peptide occupies residues 1 to 22 (MCPARSLLLVATLVLLDYLSLA). Residues Asn24, Asn93, and Asn107 are each glycosylated (N-linked (GlcNAc...) asparagine). Disulfide bonds link Cys37/Cys110, Cys64/Cys196, and Cys85/Cys123.

It belongs to the IL-6 superfamily. As to quaternary structure, heterodimer with IL12B; disulfide-linked. This heterodimer is known as interleukin IL-12. Heterodimer with EBI3/IL27B; not disulfide-linked. This heterodimer is known as interleukin IL-35. Interacts with NBR1; this interaction promotes IL-12 secretion.

Its subcellular location is the secreted. Functionally, heterodimerizes with IL12B to form the IL-12 cytokine or with EBI3/IL27B to form the IL-35 cytokine. IL-12 is primarily produced by professional antigen-presenting cells (APCs) such as B-cells and dendritic cells (DCs) as well as macrophages and granulocytes and regulates T-cell and natural killer-cell responses, induces the production of interferon-gamma (IFN-gamma), favors the differentiation of T-helper 1 (Th1) cells and is an important link between innate resistance and adaptive immunity. Mechanistically, exerts its biological effects through a receptor composed of IL12R1 and IL12R2 subunits. Binding to the receptor results in the rapid tyrosine phosphorylation of a number of cellular substrates including the JAK family kinases TYK2 and JAK2. In turn, recruited STAT4 gets phosphorylated and translocates to the nucleus where it regulates cytokine/growth factor responsive genes. As part of IL-35, plays essential roles in maintaining the immune homeostasis of the liver microenvironment and also functions as an immune-suppressive cytokine. Mediates biological events through unconventional receptors composed of IL12RB2 and gp130/IL6ST heterodimers or homodimers. Signaling requires the transcription factors STAT1 and STAT4, which form a unique heterodimer that binds to distinct DNA sites. The polypeptide is Interleukin-12 subunit alpha (IL12A) (Cercocebus atys (Sooty mangabey)).